Consider the following 132-residue polypeptide: Protein LEKR1 (132 aa).

Positions 37 to 116 (FKAMEEKVKA…KKQLSHLQDE (80 aa)) form a coiled coil.

In Homo sapiens (Human), this protein is Protein LEKR1 (LEKR1).